An 89-amino-acid polypeptide reads, in one-letter code: Small ribosomal subunit protein bS16 (89 aa).

It belongs to the bacterial ribosomal protein bS16 family.

This is Small ribosomal subunit protein bS16 from Chloroflexus aurantiacus (strain ATCC 29364 / DSM 637 / Y-400-fl).